The chain runs to 63 residues: Alpha-conotoxin-like Sm1.3 (63 aa).

Positions methionine 1 to serine 16 are cleaved as a signal peptide. Residues serine 17 to lysine 43 constitute a propeptide that is removed on maturation. 2 disulfide bridges follow: cysteine 45–cysteine 51 and cysteine 46–cysteine 59. Methionine 58 bears the Methionine sulfoxide; partial mark. Cysteine amide; partial is present on cysteine 59.

The protein belongs to the conotoxin A superfamily. Expressed by the venom duct.

The protein localises to the secreted. Functionally, alpha-conotoxins act on postsynaptic membranes, they bind to the nicotinic acetylcholine receptors (nAChR) and thus inhibit them. This chain is Alpha-conotoxin-like Sm1.3, found in Conus stercusmuscarum (Fly-specked cone).